We begin with the raw amino-acid sequence, 416 residues long: Major facilitator superfamily domain-containing protein 3 (416 aa).

A run of 12 helical transmembrane segments spans residues 10–30 (GLYL…PILL), 40–60 (VGLT…APLV), 68–88 (VWLT…AVLP), 99–119 (TTVM…DVAL), 139–158 (QVVA…LVFF), 170–190 (LTAT…LGRL), 204–224 (YLLQ…FVLT), 252–272 (LWSG…GGAL), 295–315 (LGGL…GASL), 324–344 (AALL…TATF), 365–385 (FLAT…GVLA), and 392–412 (LCFA…RLAP).

This sequence belongs to the major facilitator superfamily.

The protein resides in the membrane. This is Major facilitator superfamily domain-containing protein 3 (Mfsd3) from Rattus norvegicus (Rat).